The chain runs to 467 residues: Glycogen synthase (467 aa).

K16 serves as a coordination point for ADP-alpha-D-glucose.

It belongs to the glycosyltransferase 1 family. Bacterial/plant glycogen synthase subfamily.

The catalysed reaction is [(1-&gt;4)-alpha-D-glucosyl](n) + ADP-alpha-D-glucose = [(1-&gt;4)-alpha-D-glucosyl](n+1) + ADP + H(+). It participates in glycan biosynthesis; glycogen biosynthesis. Synthesizes alpha-1,4-glucan chains using ADP-glucose. The polypeptide is Glycogen synthase (Paracoccus denitrificans (strain Pd 1222)).